Reading from the N-terminus, the 283-residue chain is Diaminopimelate epimerase (283 aa).

Positions 13, 45, and 65 each coordinate substrate. Catalysis depends on Cys-74, which acts as the Proton donor. Residues 75–76 (GN), Asn-156, Asn-190, and 208–209 (ER) each bind substrate. Cys-217 acts as the Proton acceptor in catalysis. Residue 218-219 (GS) coordinates substrate.

This sequence belongs to the diaminopimelate epimerase family. As to quaternary structure, homodimer.

The protein resides in the cytoplasm. The catalysed reaction is (2S,6S)-2,6-diaminopimelate = meso-2,6-diaminopimelate. The protein operates within amino-acid biosynthesis; L-lysine biosynthesis via DAP pathway; DL-2,6-diaminopimelate from LL-2,6-diaminopimelate: step 1/1. In terms of biological role, catalyzes the stereoinversion of LL-2,6-diaminopimelate (L,L-DAP) to meso-diaminopimelate (meso-DAP), a precursor of L-lysine and an essential component of the bacterial peptidoglycan. In Bartonella henselae (strain ATCC 49882 / DSM 28221 / CCUG 30454 / Houston 1) (Rochalimaea henselae), this protein is Diaminopimelate epimerase.